The following is a 56-amino-acid chain: Large ribosomal subunit protein bL33 (56 aa).

This sequence belongs to the bacterial ribosomal protein bL33 family.

The polypeptide is Large ribosomal subunit protein bL33 (Haemophilus influenzae (strain 86-028NP)).